Here is a 309-residue protein sequence, read N- to C-terminus: Malate dehydrogenase (309 aa).

NAD(+) contacts are provided by residues 9-14 and Asp-33; that span reads GAGFVG. Substrate-binding residues include Arg-82 and Arg-88. NAD(+) contacts are provided by residues Asn-95 and 118-120; that span reads VNN. Substrate contacts are provided by Asn-120 and Arg-151. The active-site Proton acceptor is His-175.

This sequence belongs to the LDH/MDH superfamily. MDH type 3 family. In terms of assembly, homotetramer (active enzyme); homodimer and homotrimer at temperatures lower than 55 degrees Celsius (inactive forms).

The enzyme catalyses (S)-malate + NAD(+) = oxaloacetate + NADH + H(+). In terms of biological role, catalyzes the reversible oxidation of malate to oxaloacetate. This is Malate dehydrogenase from Chloroflexus aurantiacus (strain ATCC 29366 / DSM 635 / J-10-fl).